A 337-amino-acid polypeptide reads, in one-letter code: Neurogenic differentiation factor 6 (337 aa).

Residues 43-82 (LRGKSIKRAPGEETEKEEEEEDREEEDENGLPRRRGLRKK) are disordered. The span at 54 to 71 (EETEKEEEEEDREEEDEN) shows a compositional bias: acidic residues. Positions 80 to 86 (RKKKTTK) match the Nuclear localization signal motif. A bHLH domain is found at 94-146 (FRRQEANARERNRMHGLNDALDNLRKVVPCYSKTQKLSKIETLRLAKNYIWAL).

In terms of assembly, efficient DNA binding requires dimerization with another bHLH protein.

It is found in the nucleus. Functionally, activates E box-dependent transcription in collaboration with TCF3/E47. May be a trans-acting factor involved in the development and maintenance of the mammalian nervous system. Transactivates the promoter of its own gene. The polypeptide is Neurogenic differentiation factor 6 (NEUROD6) (Homo sapiens (Human)).